The primary structure comprises 238 residues: ATP-dependent dethiobiotin synthetase BioD (238 aa).

Position 13-18 (13-18 (DIGKTF)) interacts with ATP. T17 contacts Mg(2+). K38 is an active-site residue. Residue S42 coordinates substrate. ATP-binding positions include D55, 116-119 (EGSG), 209-211 (PRI), and N216. Positions 55 and 116 each coordinate Mg(2+).

It belongs to the dethiobiotin synthetase family. Homodimer. It depends on Mg(2+) as a cofactor.

The protein resides in the cytoplasm. It carries out the reaction (7R,8S)-7,8-diammoniononanoate + CO2 + ATP = (4R,5S)-dethiobiotin + ADP + phosphate + 3 H(+). It functions in the pathway cofactor biosynthesis; biotin biosynthesis; biotin from 7,8-diaminononanoate: step 1/2. Catalyzes a mechanistically unusual reaction, the ATP-dependent insertion of CO2 between the N7 and N8 nitrogen atoms of 7,8-diaminopelargonic acid (DAPA, also called 7,8-diammoniononanoate) to form a ureido ring. The polypeptide is ATP-dependent dethiobiotin synthetase BioD (Clostridium novyi (strain NT)).